Consider the following 426-residue polypeptide: Colanic acid biosynthesis protein WcaK (426 aa).

It belongs to the polysaccharide pyruvyl transferase family.

It functions in the pathway slime biogenesis; slime polysaccharide biosynthesis. This Escherichia coli (strain K12) protein is Colanic acid biosynthesis protein WcaK (wcaK).